The following is a 45-amino-acid chain: Photosystem II reaction center protein K (45 aa).

Residues 1–8 (MNSALFLA) constitute a propeptide that is removed on maturation. Residues 23-43 (ILPVIPVFFLLLAFVWQAAIG) traverse the membrane as a helical segment.

The protein belongs to the PsbK family. As to quaternary structure, PSII is composed of 1 copy each of membrane proteins PsbA, PsbB, PsbC, PsbD, PsbE, PsbF, PsbH, PsbI, PsbJ, PsbK, PsbL, PsbM, PsbT, PsbX, PsbY, PsbZ, Psb30/Ycf12, at least 3 peripheral proteins of the oxygen-evolving complex and a large number of cofactors. It forms dimeric complexes.

The protein localises to the plastid. It is found in the chloroplast thylakoid membrane. One of the components of the core complex of photosystem II (PSII). PSII is a light-driven water:plastoquinone oxidoreductase that uses light energy to abstract electrons from H(2)O, generating O(2) and a proton gradient subsequently used for ATP formation. It consists of a core antenna complex that captures photons, and an electron transfer chain that converts photonic excitation into a charge separation. This chain is Photosystem II reaction center protein K, found in Porphyra purpurea (Red seaweed).